A 118-amino-acid chain; its full sequence is Small ribosomal subunit protein uS13 (118 aa).

The tract at residues 94–118 (GLPLRGQRTKTNARTRKGPRKPIRK) is disordered.

It belongs to the universal ribosomal protein uS13 family. In terms of assembly, part of the 30S ribosomal subunit. Forms a loose heterodimer with protein S19. Forms two bridges to the 50S subunit in the 70S ribosome.

Functionally, located at the top of the head of the 30S subunit, it contacts several helices of the 16S rRNA. In the 70S ribosome it contacts the 23S rRNA (bridge B1a) and protein L5 of the 50S subunit (bridge B1b), connecting the 2 subunits; these bridges are implicated in subunit movement. Contacts the tRNAs in the A and P-sites. The polypeptide is Small ribosomal subunit protein uS13 (Alcanivorax borkumensis (strain ATCC 700651 / DSM 11573 / NCIMB 13689 / SK2)).